A 139-amino-acid chain; its full sequence is Putative truncated protein trichome birefringence-like 46 (139 aa).

The protein belongs to the PC-esterase family. TBL subfamily.

The sequence is that of Putative truncated protein trichome birefringence-like 46 (TBL46) from Arabidopsis thaliana (Mouse-ear cress).